Reading from the N-terminus, the 500-residue chain is L-arabinose isomerase (500 aa).

Residues Glu306, Glu333, His350, and His450 each coordinate Mn(2+).

It belongs to the arabinose isomerase family. In terms of assembly, homohexamer. It depends on Mn(2+) as a cofactor.

It carries out the reaction beta-L-arabinopyranose = L-ribulose. It participates in carbohydrate degradation; L-arabinose degradation via L-ribulose; D-xylulose 5-phosphate from L-arabinose (bacterial route): step 1/3. Catalyzes the conversion of L-arabinose to L-ribulose. The sequence is that of L-arabinose isomerase from Shigella boydii serotype 18 (strain CDC 3083-94 / BS512).